The primary structure comprises 524 residues: GMP synthase [glutamine-hydrolyzing] (524 aa).

Residues 9 to 207 (RILILDFGSQ…VIHICQCIPN (199 aa)) form the Glutamine amidotransferase type-1 domain. The active-site Nucleophile is the C86. Catalysis depends on residues H181 and E183. The GMPS ATP-PPase domain maps to 208 to 399 (WTTKHIIEDS…LGLPADLIYR (192 aa)). 235 to 241 (SGGVDSA) serves as a coordination point for ATP.

In terms of assembly, homodimer.

The catalysed reaction is XMP + L-glutamine + ATP + H2O = GMP + L-glutamate + AMP + diphosphate + 2 H(+). The protein operates within purine metabolism; GMP biosynthesis; GMP from XMP (L-Gln route): step 1/1. In terms of biological role, catalyzes the synthesis of GMP from XMP. The chain is GMP synthase [glutamine-hydrolyzing] from Coxiella burnetii (strain RSA 493 / Nine Mile phase I).